A 457-amino-acid chain; its full sequence is Multidrug resistance protein MdtK (457 aa).

Helical transmembrane passes span 11–31 (LLALAIPVILAQVAQTAMGFV), 53–73 (IWLPAILFGHGLLLALTPVVA), 93–113 (WLAGFVSVLIMVVLWNAGYII), 127–147 (AVGYLRALLWGAPGYLFFQVA), 160–180 (GMVMGFIGLLVNIPVNYIFIY), 191–211 (VGCGVATASVYWVMFASMLWW), 243–263 (LPIALALFFEVTLFAVVALLV), 276–296 (IALNFSSLMFVLPLSLAAAVT), 316–336 (RTGVGVGVCLAVFTAIFTVLM), 357–377 (LMLLAAIYQISDSIQVIGSGI), 387–407 (IFFITFTAYWVLGLPSGYLLA), and 418–438 (PAGFWCGFIIGLTSAAIMMML).

It belongs to the multi antimicrobial extrusion (MATE) (TC 2.A.66.1) family. MdtK subfamily.

It is found in the cell inner membrane. In terms of biological role, multidrug efflux pump that functions probably as a Na(+)/drug antiporter. This chain is Multidrug resistance protein MdtK, found in Klebsiella pneumoniae subsp. pneumoniae (strain ATCC 700721 / MGH 78578).